We begin with the raw amino-acid sequence, 658 residues long: Carnitine O-palmitoyltransferase 2, mitochondrial (658 aa).

A mitochondrion-targeting transit peptide spans 1 to 25; the sequence is MMPRLLLRDWPRCPSLVLGAPSRPL. At 26 to 178 the chain is on the mitochondrial matrix side; sequence SAVSGPAEYL…GLLEPEVFHL (153 aa). An N6-succinyllysine modification is found at Lys-69. Lys-79 bears the N6-acetyllysine mark. At Lys-85 the chain carries N6-succinyllysine. An intramembrane region (note=Mitochondrial inner membrane) is located at residues 179-208; sequence NPARSDTDAFKRLIRFVPSSLSWYGAYLVN. The Mitochondrial matrix segment spans residues 209–658; the sequence is AYPLDMSQYF…DALEGKAIKT (450 aa). The residue at position 239 (Lys-239) is an N6-acetyllysine; alternate. Lys-239 carries the post-translational modification N6-succinyllysine; alternate. Residue Lys-305 is modified to N6-acetyllysine. Residue His-372 is the Proton acceptor of the active site. Lys-418 carries the N6-acetyllysine; alternate modification. Residue Lys-418 is modified to N6-succinyllysine; alternate. N6-succinyllysine occurs at positions 424 and 439. Residue 452–464 coordinates CoA; the sequence is GKEFLKKKKLSPD. Residues Tyr-486, Ser-488, and Thr-499 each coordinate (R)-carnitine. N6-acetyllysine; alternate is present on residues Lys-510 and Lys-544. Lys-510 and Lys-544 each carry N6-succinyllysine; alternate.

This sequence belongs to the carnitine/choline acetyltransferase family.

It localises to the mitochondrion inner membrane. It carries out the reaction (R)-carnitine + hexadecanoyl-CoA = O-hexadecanoyl-(R)-carnitine + CoA. The catalysed reaction is octanoyl-CoA + (R)-carnitine = O-octanoyl-(R)-carnitine + CoA. The enzyme catalyses decanoyl-CoA + (R)-carnitine = O-decanoyl-(R)-carnitine + CoA. It catalyses the reaction dodecanoyl-CoA + (R)-carnitine = O-dodecanoyl-R-carnitine + CoA. It carries out the reaction tetradecanoyl-CoA + (R)-carnitine = O-tetradecanoyl-(R)-carnitine + CoA. The catalysed reaction is (R)-carnitine + octadecanoyl-CoA = O-octadecanoyl-(R)-carnitine + CoA. The enzyme catalyses eicosanoyl-CoA + (R)-carnitine = O-eicosanoyl-(R)-carnitine + CoA. It catalyses the reaction (9Z)-tetradecenoyl-CoA + (R)-carnitine = O-(9Z)-tetradecenoyl-(R)-carnitine + CoA. It carries out the reaction (5Z)-tetradecenoyl-CoA + (R)-carnitine = O-(5Z)-tetradecenoyl-(R)-carnitine + CoA. The catalysed reaction is (R)-carnitine + (9Z)-octadecenoyl-CoA = O-(9Z)-octadecenoyl-(R)-carnitine + CoA. The enzyme catalyses 4,8-dimethylnonanoyl-CoA + (R)-carnitine = O-4,8-dimethylnonanoyl-(R)-carnitine + CoA. It participates in lipid metabolism; fatty acid beta-oxidation. Its function is as follows. Involved in the intramitochondrial synthesis of acylcarnitines from accumulated acyl-CoA metabolites. Reconverts acylcarnitines back into the respective acyl-CoA esters that can then undergo beta-oxidation, an essential step for the mitochondrial uptake of long-chain fatty acids and their subsequent beta-oxidation in the mitochondrion. Active with medium (C8-C12) and long-chain (C14-C18) acyl-CoA esters. The polypeptide is Carnitine O-palmitoyltransferase 2, mitochondrial (Mus musculus (Mouse)).